Reading from the N-terminus, the 618-residue chain is uncharacterized protein (618 aa).

Disordered regions lie at residues 70 to 118 (SSEY…SLPR), 330 to 352 (LTAR…EVPC), 456 to 552 (TLPV…PILT), and 587 to 618 (IPSD…LKTL). Composition is skewed to basic and acidic residues over residues 74 to 84 (KGTRRDSRGYE) and 333 to 343 (RTEEEPERHVP). The segment covering 463-481 (TSRPQSPSSLSSKTTGLPL) has biased composition (low complexity). Composition is skewed to polar residues over residues 485-516 (KPTS…NSLM) and 609-618 (SDPSHSLKTL).

This is an uncharacterized protein from Danio rerio (Zebrafish).